The chain runs to 329 residues: Ketol-acid reductoisomerase (NADP(+)) (329 aa).

The 180-residue stretch at 2 to 181 folds into the KARI N-terminal Rossmann domain; it reads VQKYYESDAD…GATRAVVFET (180 aa). Residues 25–28, Arg-48, Ser-52, and 82–85 each bind NADP(+); these read YGSQ and DENQ. Residue His-107 is part of the active site. Position 133 (Gly-133) interacts with NADP(+). One can recognise a KARI C-terminal knotted domain in the interval 182–327; the sequence is TFAEETETDL…AEIRGFMPQF (146 aa). Mg(2+) is bound by residues Asp-190, Glu-194, Glu-226, and Glu-230. A substrate-binding site is contributed by Ser-251.

The protein belongs to the ketol-acid reductoisomerase family. The cofactor is Mg(2+).

It catalyses the reaction (2R)-2,3-dihydroxy-3-methylbutanoate + NADP(+) = (2S)-2-acetolactate + NADPH + H(+). The enzyme catalyses (2R,3R)-2,3-dihydroxy-3-methylpentanoate + NADP(+) = (S)-2-ethyl-2-hydroxy-3-oxobutanoate + NADPH + H(+). It participates in amino-acid biosynthesis; L-isoleucine biosynthesis; L-isoleucine from 2-oxobutanoate: step 2/4. It functions in the pathway amino-acid biosynthesis; L-valine biosynthesis; L-valine from pyruvate: step 2/4. Involved in the biosynthesis of branched-chain amino acids (BCAA). Catalyzes an alkyl-migration followed by a ketol-acid reduction of (S)-2-acetolactate (S2AL) to yield (R)-2,3-dihydroxy-isovalerate. In the isomerase reaction, S2AL is rearranged via a Mg-dependent methyl migration to produce 3-hydroxy-3-methyl-2-ketobutyrate (HMKB). In the reductase reaction, this 2-ketoacid undergoes a metal-dependent reduction by NADPH to yield (R)-2,3-dihydroxy-isovalerate. This is Ketol-acid reductoisomerase (NADP(+)) from Methanoculleus marisnigri (strain ATCC 35101 / DSM 1498 / JR1).